The chain runs to 31 residues: Potassium channel toxin alpha-KTx 5.5 (31 aa).

3 disulfide bridges follow: C3–C21, C8–C26, and C12–C28. Residues 6–9 are [R/K]XCQ motif; the sequence is RRCE. H31 carries the histidine amide modification.

Expressed by the venom gland.

The protein resides in the secreted. In terms of biological role, blocks small conductance calcium-activated potassium channels. The protein is Potassium channel toxin alpha-KTx 5.5 of Hottentotta tamulus (Eastern Indian scorpion).